Reading from the N-terminus, the 332-residue chain is Biotin synthase (332 aa).

One can recognise a Radical SAM core domain in the interval 53 to 282 (YFGKKVKLNM…SKEIRISGGR (230 aa)). [4Fe-4S] cluster contacts are provided by Cys-71, Cys-75, and Cys-78. The [2Fe-2S] cluster site is built by Cys-115, Cys-147, Cys-207, and Arg-277.

This sequence belongs to the radical SAM superfamily. Biotin synthase family. As to quaternary structure, homodimer. [4Fe-4S] cluster serves as cofactor. [2Fe-2S] cluster is required as a cofactor.

It catalyses the reaction (4R,5S)-dethiobiotin + (sulfur carrier)-SH + 2 reduced [2Fe-2S]-[ferredoxin] + 2 S-adenosyl-L-methionine = (sulfur carrier)-H + biotin + 2 5'-deoxyadenosine + 2 L-methionine + 2 oxidized [2Fe-2S]-[ferredoxin]. Its pathway is cofactor biosynthesis; biotin biosynthesis; biotin from 7,8-diaminononanoate: step 2/2. Functionally, catalyzes the conversion of dethiobiotin (DTB) to biotin by the insertion of a sulfur atom into dethiobiotin via a radical-based mechanism. This Bacillus cytotoxicus (strain DSM 22905 / CIP 110041 / 391-98 / NVH 391-98) protein is Biotin synthase.